The primary structure comprises 274 residues: 2,3,4,5-tetrahydropyridine-2,6-dicarboxylate N-succinyltransferase (274 aa).

Positions 104 and 141 each coordinate substrate.

This sequence belongs to the transferase hexapeptide repeat family. In terms of assembly, homotrimer.

The protein localises to the cytoplasm. The catalysed reaction is (S)-2,3,4,5-tetrahydrodipicolinate + succinyl-CoA + H2O = (S)-2-succinylamino-6-oxoheptanedioate + CoA. It functions in the pathway amino-acid biosynthesis; L-lysine biosynthesis via DAP pathway; LL-2,6-diaminopimelate from (S)-tetrahydrodipicolinate (succinylase route): step 1/3. The chain is 2,3,4,5-tetrahydropyridine-2,6-dicarboxylate N-succinyltransferase from Salmonella arizonae (strain ATCC BAA-731 / CDC346-86 / RSK2980).